The primary structure comprises 204 residues: High frequency lysogenization protein HflD homolog (204 aa).

Belongs to the HflD family.

It is found in the cytoplasm. The protein resides in the cell inner membrane. In Shewanella amazonensis (strain ATCC BAA-1098 / SB2B), this protein is High frequency lysogenization protein HflD homolog.